Here is a 302-residue protein sequence, read N- to C-terminus: Lactoylglutathione lyase (302 aa).

2 VOC domains span residues 11–153 and 166–301; these read KLNH…LVSQ and RFNH…VIEQ. H14 provides a ligand contact to Zn(2+). R18 is a binding site for substrate. Residue E75 coordinates Zn(2+). 3 residues coordinate substrate: N79, R99, and H103. Residues H103 and E149 each coordinate Zn(2+). E149 serves as the catalytic Proton donor/acceptor.

It belongs to the glyoxalase I family. Monomer. Zn(2+) serves as cofactor. Requires Cu(2+) as cofactor. It depends on Ni(2+) as a cofactor. The cofactor is Mn(2+).

The enzyme catalyses (R)-S-lactoylglutathione = methylglyoxal + glutathione. The protein operates within secondary metabolite metabolism; methylglyoxal degradation; (R)-lactate from methylglyoxal: step 1/2. Its function is as follows. Catalyzes the conversion of hemimercaptal, formed from methylglyoxal and glutathione, to S-lactoylglutathione. The sequence is that of Lactoylglutathione lyase (glo1) from Schizosaccharomyces pombe (strain 972 / ATCC 24843) (Fission yeast).